The following is a 491-amino-acid chain: Angiopoietin-related protein 1 (491 aa).

The signal sequence occupies residues 1 to 23 (MKAFIWTLSVLFFLLMGIGHGRG). Residues 80–168 (ITRMDLENLK…LNVTTEMLKM (89 aa)) adopt a coiled-coil conformation. Residues Asn-160 and Asn-188 are each glycosylated (N-linked (GlcNAc...) asparagine). The Fibrinogen C-terminal domain maps to 271-491 (FINEGPYKDC…AVQMLIKPID (221 aa)). 2 cysteine pairs are disulfide-bonded: Cys-280/Cys-309 and Cys-432/Cys-445.

The protein resides in the secreted. In Bos taurus (Bovine), this protein is Angiopoietin-related protein 1 (ANGPTL1).